The following is a 311-amino-acid chain: Probable cysteine synthase (311 aa).

Lys-45 carries the post-translational modification N6-(pyridoxal phosphate)lysine. Pyridoxal 5'-phosphate-binding positions include Asn-75, 182–186 (GTGGT), and Ser-270.

This sequence belongs to the cysteine synthase/cystathionine beta-synthase family. It depends on pyridoxal 5'-phosphate as a cofactor.

The catalysed reaction is O-acetyl-L-serine + hydrogen sulfide = L-cysteine + acetate. It functions in the pathway amino-acid biosynthesis; L-cysteine biosynthesis; L-cysteine from L-serine: step 2/2. This chain is Probable cysteine synthase (ytkP), found in Bacillus subtilis (strain 168).